The chain runs to 319 residues: Ribosomal RNA small subunit methyltransferase H (319 aa).

S-adenosyl-L-methionine-binding positions include 39-41, aspartate 59, phenylalanine 83, aspartate 104, and glutamine 111; that span reads GGH.

This sequence belongs to the methyltransferase superfamily. RsmH family.

The protein localises to the cytoplasm. It carries out the reaction cytidine(1402) in 16S rRNA + S-adenosyl-L-methionine = N(4)-methylcytidine(1402) in 16S rRNA + S-adenosyl-L-homocysteine + H(+). Specifically methylates the N4 position of cytidine in position 1402 (C1402) of 16S rRNA. The protein is Ribosomal RNA small subunit methyltransferase H of Ralstonia nicotianae (strain ATCC BAA-1114 / GMI1000) (Ralstonia solanacearum).